A 193-amino-acid chain; its full sequence is Cbp/p300-interacting transactivator 1 (193 aa).

Disordered regions lie at residues 1–26 (MPTT…NQEM), 50–88 (VASN…LHPA), and 106–147 (GMAA…SPAI). Over residues 54 to 73 (GTKASGAPTSSSGSPIGSPT) the composition is skewed to low complexity. A Nuclear export signal motif is present at residues 158-167 (LMSLVVELGL).

It belongs to the CITED family. Interacts (via C-terminus) with CREBBP. Interacts with EGR2. Homodimer. Binds to RBM14. Interacts (via N-terminus) with HSPA8; the interaction suppresses the association of CITED1 with p300/CBP and SMAD-mediated transcription transactivation. Interacts (via C-terminus) with TOX3 (via HGM box); the interaction increases estrogen-response element (ERE)-dependent transcription and protection against cell death. Interacts with ESR1; the interaction occurs in a estrogen-dependent manner. Interacts (unphosphorylated form preferentially and via C-terminus) with EP300. Post-translationally, phosphorylated. Phosphorylation changes in a cell cycle-dependent manner and reduces its transcriptional coactivator activity. Expressed only in melanocytes and testis.

The protein localises to the nucleus. The protein resides in the cytoplasm. In terms of biological role, transcriptional coactivator of the p300/CBP-mediated transcription complex. Enhances SMAD-mediated transcription by strengthening the functional link between the DNA-binding SMAD transcription factors and the p300/CBP transcription coactivator complex. Stimulates estrogen-dependent transactivation activity mediated by estrogen receptors signaling; stabilizes the interaction of estrogen receptor ESR1 and histone acetyltransferase EP300. Positively regulates TGF-beta signaling through its association with the SMAD/p300/CBP-mediated transcriptional coactivator complex. Induces transcription from estrogen-responsive promoters and protection against cell death. Potentiates EGR2-mediated transcriptional activation activity from the ERBB2 promoter. Acts as an inhibitor of osteoblastic mineralization through a cAMP-dependent parathyroid hormone receptor signaling. May play a role in pigmentation of melanocytes. Associates with chromatin to the estrogen-responsive TGF-alpha promoter region in a estrogen-dependent manner. This is Cbp/p300-interacting transactivator 1 (CITED1) from Homo sapiens (Human).